The following is a 294-amino-acid chain: Nucleotide-binding protein NT01CX_1284 (294 aa).

Residue 8 to 15 coordinates ATP; the sequence is GLSGAGKS. A GTP-binding site is contributed by 59–62; it reads DIRG.

It belongs to the RapZ-like family.

Its function is as follows. Displays ATPase and GTPase activities. This is Nucleotide-binding protein NT01CX_1284 from Clostridium novyi (strain NT).